The primary structure comprises 194 residues: MTELVLIMVSAILVNNFVLVQFLGLCPFMGVSKKIETAIGLSLATTFVLTLAAMCSYLVQQYVLKPLDLEFLRTISFILVIAVTVQFTEMVVNKTSPLLYRVLGIFLPLITTNCIVLGVALLNANKAEFTFITATVNGFAAGLGFSLVLVLFAAMRERIAIADVPKSFQGAAIGMITAGLMSLAFMGFAGLIKL.

The next 6 membrane-spanning stretches (helical) occupy residues Leu-4–Gly-24, Ile-39–Val-59, Phe-71–Val-91, Val-102–Leu-122, Phe-131–Leu-151, and Ala-172–Ile-192.

The protein belongs to the NqrDE/RnfAE family. As to quaternary structure, the complex is composed of six subunits: RnfA, RnfB, RnfC, RnfD, RnfE and RnfG.

It localises to the cell inner membrane. Its function is as follows. Part of a membrane-bound complex that couples electron transfer with translocation of ions across the membrane. The protein is Ion-translocating oxidoreductase complex subunit A of Ectopseudomonas mendocina (strain ymp) (Pseudomonas mendocina).